A 74-amino-acid chain; its full sequence is Omega-filistatoxin-Kh1a (74 aa).

In terms of processing, contains 6 disulfide bonds. Expressed by the venom gland.

It is found in the secreted. Functionally, potently blocks vertebrate calcium channels Cav1 and Cav2. Is the most active on Cav2.2/CACNA1B (from HEK) (IC(50)=2.3 nM), followed by Cav2.1/CACNA1A (IC(50)=4.3 nM), Cav2.2/CACNA1B (from oocyte) (IC(50)=14.4 nM), Cav1.2/CACNA1C (IC(50)=26.8 nM), and Cav2.3/CACNA1E (IC(50)=96.4 nM). This Kukulcania hibernalis (Southern house spider) protein is Omega-filistatoxin-Kh1a.